The following is a 385-amino-acid chain: Rubredoxin-NAD(+) reductase (385 aa).

FAD contacts are provided by residues 8–11, 32–33, Ile-79, Glu-156, Asp-275, and Ile-293; these read AGTA and SR.

Belongs to the FAD-dependent oxidoreductase family. As to quaternary structure, homodimer. FAD is required as a cofactor.

The protein resides in the cytoplasm. The enzyme catalyses 2 reduced [rubredoxin] + NAD(+) + H(+) = 2 oxidized [rubredoxin] + NADH. It functions in the pathway hydrocarbon metabolism; alkane degradation. Functionally, involved in the hydrocarbon hydroxylating system, which transfers electrons from NADH to rubredoxin reductase and then through rubredoxin to alkane 1 monooxygenase. This is Rubredoxin-NAD(+) reductase (alkT) from Pseudomonas putida (Arthrobacter siderocapsulatus).